The primary structure comprises 350 residues: MALDENKRKAIDLAIKQIDKAFGKGALVRLGEKPVEKIDSISTGSLGLDIALGIGGIPQGRIIEIYGPESSGKTTLALQVIAECQKKGGICAFIDAEHALDVSYAKRLGVDAENLLVSQPDYGEQALEILETLTRSGAVDLIVVDSVAALTPKSEIDGDMGDQHVGLQARLMSQALRKVTGVLHKMNTTVIFINQIRMKIGMMGYGSPETTTGGNALKFYASVRIDVRRIASLKQGEQHIGNRVKAKVVKNKVAPPFREAEFDIMFGEGISQEGELIDYGVKLDIVDKSGSWLSYGDKKLGQGKENAKAFLKENKEIANEIQAKIIGAIGSSDEITTFGDDEDESENLES.

An ATP-binding site is contributed by 67 to 74 (GPESSGKT).

It belongs to the RecA family.

It is found in the cytoplasm. Its function is as follows. Can catalyze the hydrolysis of ATP in the presence of single-stranded DNA, the ATP-dependent uptake of single-stranded DNA by duplex DNA, and the ATP-dependent hybridization of homologous single-stranded DNAs. It interacts with LexA causing its activation and leading to its autocatalytic cleavage. The sequence is that of Protein RecA from Wolinella succinogenes (strain ATCC 29543 / DSM 1740 / CCUG 13145 / JCM 31913 / LMG 7466 / NCTC 11488 / FDC 602W) (Vibrio succinogenes).